Consider the following 118-residue polypeptide: Large ribosomal subunit protein uL18 (118 aa).

Over residues 1 to 10 (MKTTRRDATR) the composition is skewed to basic and acidic residues. Residues 1-20 (MKTTRRDATRSRHQRVRRKV) are disordered. A compositionally biased stretch (basic residues) spans 11 to 20 (SRHQRVRRKV).

It belongs to the universal ribosomal protein uL18 family. In terms of assembly, part of the 50S ribosomal subunit; part of the 5S rRNA/L5/L18/L25 subcomplex. Contacts the 5S and 23S rRNAs.

Its function is as follows. This is one of the proteins that bind and probably mediate the attachment of the 5S RNA into the large ribosomal subunit, where it forms part of the central protuberance. The polypeptide is Large ribosomal subunit protein uL18 (Acaryochloris marina (strain MBIC 11017)).